Here is a 251-residue protein sequence, read N- to C-terminus: Triosephosphate isomerase (251 aa).

9-11 (NWK) contributes to the substrate binding site. His-94 acts as the Electrophile in catalysis. Glu-166 (proton acceptor) is an active-site residue. Substrate contacts are provided by residues Gly-172, Ser-211, and 232 to 233 (GG).

This sequence belongs to the triosephosphate isomerase family. Homodimer.

The protein resides in the cytoplasm. The catalysed reaction is D-glyceraldehyde 3-phosphate = dihydroxyacetone phosphate. Its pathway is carbohydrate biosynthesis; gluconeogenesis. The protein operates within carbohydrate degradation; glycolysis; D-glyceraldehyde 3-phosphate from glycerone phosphate: step 1/1. In terms of biological role, involved in the gluconeogenesis. Catalyzes stereospecifically the conversion of dihydroxyacetone phosphate (DHAP) to D-glyceraldehyde-3-phosphate (G3P). This is Triosephosphate isomerase from Stenotrophomonas maltophilia (strain R551-3).